Consider the following 294-residue polypeptide: RAB7A-interacting MON1-CCZ1 complex subunit 1 (294 aa).

Ala-2 bears the N-acetylalanine mark.

It belongs to the RIMOC1 family. In terms of assembly, interacts with the MON1A-CCZ1B complex. Interacts with GDP-bound RAB7A and promotes its interaction with the MON1A-CCZ1B complex.

It is found in the cytoplasm. The protein resides in the cytosol. Plays an important role in the removal of damaged mitochondria via mitophagy by controlling the stability and localization of RAB7A. Required for the recruitment of RAB7A and ATG9A vesicles to damaged mitochondria and promotes the stability of RAB7A by inhibiting its proteasomal degradation during mitophagy. This chain is RAB7A-interacting MON1-CCZ1 complex subunit 1, found in Mus musculus (Mouse).